The primary structure comprises 420 residues: Serine hydroxymethyltransferase (420 aa).

Residues Leu-121 and 125 to 127 (GHL) each bind (6S)-5,6,7,8-tetrahydrofolate. An N6-(pyridoxal phosphate)lysine modification is found at Lys-230.

It belongs to the SHMT family. In terms of assembly, homodimer. Pyridoxal 5'-phosphate is required as a cofactor.

The protein resides in the cytoplasm. It carries out the reaction (6R)-5,10-methylene-5,6,7,8-tetrahydrofolate + glycine + H2O = (6S)-5,6,7,8-tetrahydrofolate + L-serine. The protein operates within one-carbon metabolism; tetrahydrofolate interconversion. Its pathway is amino-acid biosynthesis; glycine biosynthesis; glycine from L-serine: step 1/1. Catalyzes the reversible interconversion of serine and glycine with tetrahydrofolate (THF) serving as the one-carbon carrier. This reaction serves as the major source of one-carbon groups required for the biosynthesis of purines, thymidylate, methionine, and other important biomolecules. Also exhibits THF-independent aldolase activity toward beta-hydroxyamino acids, producing glycine and aldehydes, via a retro-aldol mechanism. The protein is Serine hydroxymethyltransferase of Streptomyces avermitilis (strain ATCC 31267 / DSM 46492 / JCM 5070 / NBRC 14893 / NCIMB 12804 / NRRL 8165 / MA-4680).